The following is an 814-amino-acid chain: Acyl-coenzyme A dehydrogenase (814 aa).

Residue glutamate 497 is the Proton acceptor of the active site.

The protein belongs to the acyl-CoA dehydrogenase family. FAD serves as cofactor.

The enzyme catalyses a medium-chain 2,3-saturated fatty acyl-CoA + oxidized [electron-transfer flavoprotein] + H(+) = a medium-chain (2E)-enoyl-CoA + reduced [electron-transfer flavoprotein]. It carries out the reaction a long-chain 2,3-saturated fatty acyl-CoA + oxidized [electron-transfer flavoprotein] + H(+) = a long-chain (2E)-enoyl-CoA + reduced [electron-transfer flavoprotein]. The protein operates within lipid metabolism; fatty acid beta-oxidation. Its function is as follows. Catalyzes the dehydrogenation of acyl-coenzymes A (acyl-CoAs) to 2-enoyl-CoAs, the first step of the beta-oxidation cycle of fatty acid degradation. Is required for S.typhimurium to utilize medium- and long-chain fatty acids as sole carbon sources for growth. Is needed for bacterial survival during carbone-source starvation. The sequence is that of Acyl-coenzyme A dehydrogenase (fadE) from Salmonella typhimurium (strain LT2 / SGSC1412 / ATCC 700720).